The chain runs to 374 residues: MANQVIRCKAAVAWEAGKPLSIEEIEVAPPKAHEVRIKILATAVCHTDAYTLSGADPEGCFPVILGHEGAGIVESVGEGVTKLKAGDTVIPLYIPQCGECKFCLNPKTNLCQKIRVTQGKGLMPDGTSRFTCKGKSVFHFMGTSTFSEYTVVADISVAKIDPSAPLDKVCLLGCGISTGYGAAVNTAKVEPGSTCAVFGLGGVGLAVIMGCKVAGASRIIGIDINKDKFAKAKEFGASECISPQDFSKSIQEVLVEMTDGGVDYSFECIGNVKVMRSALEAAHKGWGVSVVVGVAASGEEISTRPFQLVTGRTWKGTAFGGWKSVESVPKLVSEYMSKKIKVDEFVTGNLSFDQINQAFDLMHSGDSIRTVLKM.

Residue alanine 2 is modified to N-acetylalanine. Positions 45, 67, 97, 100, 103, 111, and 174 each coordinate Zn(2+). N6-succinyllysine is present on lysine 233. Serine 247 carries the post-translational modification Phosphoserine. At lysine 315 the chain carries N6-succinyllysine. 2 positions are modified to phosphoserine: serine 324 and serine 351.

The protein belongs to the zinc-containing alcohol dehydrogenase family. Class-III subfamily. Homodimer. It depends on Zn(2+) as a cofactor. In terms of tissue distribution, ubiquitous.

It is found in the cytoplasm. The catalysed reaction is a primary alcohol + NAD(+) = an aldehyde + NADH + H(+). The enzyme catalyses a secondary alcohol + NAD(+) = a ketone + NADH + H(+). It catalyses the reaction S-(hydroxymethyl)glutathione + NADP(+) = S-formylglutathione + NADPH + H(+). It carries out the reaction S-(hydroxymethyl)glutathione + NAD(+) = S-formylglutathione + NADH + H(+). The catalysed reaction is 20-oxo-(5Z,8Z,11Z,14Z)-eicosatetraenoate + NAD(+) + H2O = (5Z,8Z,11Z,14Z)-eicosatetraenedioate + NADH + 2 H(+). The enzyme catalyses 20-hydroxy-(5Z,8Z,11Z,14Z)-eicosatetraenoate + NAD(+) = 20-oxo-(5Z,8Z,11Z,14Z)-eicosatetraenoate + NADH + H(+). It catalyses the reaction S-nitrosoglutathione + NADH + H(+) = S-(hydroxysulfenamide)glutathione + NAD(+). Catalyzes the oxidation of long-chain primary alcohols and the oxidation of S-(hydroxymethyl) glutathione. Also oxidizes long chain omega-hydroxy fatty acids, such as 20-HETE, producing both the intermediate aldehyde, 20-oxoarachidonate and the end product, a dicarboxylic acid, (5Z,8Z,11Z,14Z)-eicosatetraenedioate. Class-III ADH is remarkably ineffective in oxidizing ethanol. Required for clearance of cellular formaldehyde, a cytotoxic and carcinogenic metabolite that induces DNA damage. Also acts as a S-nitroso-glutathione reductase by catalyzing the NADH-dependent reduction of S-nitrosoglutathione, thereby regulating protein S-nitrosylation. The polypeptide is Alcohol dehydrogenase class-3 (Mus musculus (Mouse)).